The chain runs to 375 residues: Phosphoglycerate kinase (375 aa).

(2R)-3-phosphoglycerate is bound by residues V1, D2, F3, N4, R17, S40, H41, G43, R44, L99, R100, H147, and R148. Residue G191 participates in ADP binding. G191 serves as a coordination point for CDP. AMP is bound by residues A192 and K193. Position 192 (A192) interacts with ATP. Mg(2+) is bound at residue A192. D196 contributes to the CDP binding site. D196 is a Mg(2+) binding site. Position 197 (K197) interacts with AMP. ATP is bound at residue K197. Position 215 (G215) interacts with ADP. G215 is a CDP binding site. Residues G216 and G290 each coordinate AMP. Residues G216 and G290 each coordinate ATP. Residues G315 and F320 each coordinate CDP. F320 is an ADP binding site. E321 lines the AMP pocket. ATP-binding residues include E321, D352, and T353. D352 lines the Mg(2+) pocket.

It belongs to the phosphoglycerate kinase family. As to quaternary structure, monomer. The cofactor is Mg(2+).

The catalysed reaction is (2R)-3-phosphoglycerate + ATP = (2R)-3-phospho-glyceroyl phosphate + ADP. It functions in the pathway carbohydrate degradation; glycolysis; pyruvate from D-glyceraldehyde 3-phosphate: step 2/5. This Tetrahymena pyriformis protein is Phosphoglycerate kinase (PGK).